Reading from the N-terminus, the 756-residue chain is U3 small nucleolar RNA-associated protein 14 homolog B (756 aa).

The interval Asp21–Gln44 is disordered. Phosphoserine occurs at positions 29, 31, and 37. 2 coiled-coil regions span residues Ser215–Lys244 and Pro316–Glu345. Basic and acidic residues-rich tracts occupy residues Lys419–Asp428 and Leu452–Glu468. 2 disordered regions span residues Lys419–Glu468 and Gln497–Lys539. Positions Leu449–Glu476 form a coiled coil. Residue Ser554 is modified to Phosphoserine.

Belongs to the UTP14 family. As to expression, expressed predominantly in germ cells of the testis; weakly expressed in brain.

The protein resides in the nucleus. It is found in the nucleolus. Essential for spermatogenesis. May be required specifically for ribosome biogenesis and hence protein synthesis during male meiosis. This Mus musculus (Mouse) protein is U3 small nucleolar RNA-associated protein 14 homolog B (Utp14b).